The following is a 178-amino-acid chain: Putative pre-16S rRNA nuclease (178 aa).

A compositionally biased stretch (basic and acidic residues) spans 1–18 (MDHAEQGPDRPGVDDPGR). The interval 1 to 21 (MDHAEQGPDRPGVDDPGRGRR) is disordered.

The protein belongs to the YqgF nuclease family.

The protein localises to the cytoplasm. Functionally, could be a nuclease involved in processing of the 5'-end of pre-16S rRNA. This chain is Putative pre-16S rRNA nuclease, found in Rhodococcus jostii (strain RHA1).